We begin with the raw amino-acid sequence, 109 residues long: Cell division protein ZapA (109 aa).

Positions 21 to 100 (PDQRDALNQA…EQALLERGRI (80 aa)) form a coiled coil.

This sequence belongs to the ZapA family. Type 1 subfamily. In terms of assembly, homodimer. Interacts with FtsZ.

The protein localises to the cytoplasm. Functionally, activator of cell division through the inhibition of FtsZ GTPase activity, therefore promoting FtsZ assembly into bundles of protofilaments necessary for the formation of the division Z ring. It is recruited early at mid-cell but it is not essential for cell division. This is Cell division protein ZapA from Shigella dysenteriae serotype 1 (strain Sd197).